The sequence spans 341 residues: Glycerol-3-phosphate dehydrogenase [NAD(P)+] 1 (341 aa).

NADPH is bound by residues Ser-11, Trp-12, Arg-32, Arg-33, and Lys-106. Residues Lys-106, Gly-137, and Ser-139 each coordinate sn-glycerol 3-phosphate. Ala-141 is a binding site for NADPH. The sn-glycerol 3-phosphate site is built by Lys-192, Asp-245, Ser-255, Arg-256, and Asn-257. Lys-192 serves as the catalytic Proton acceptor. Arg-256 lines the NADPH pocket. Positions 280 and 282 each coordinate NADPH.

This sequence belongs to the NAD-dependent glycerol-3-phosphate dehydrogenase family.

The protein resides in the cytoplasm. The catalysed reaction is sn-glycerol 3-phosphate + NAD(+) = dihydroxyacetone phosphate + NADH + H(+). It carries out the reaction sn-glycerol 3-phosphate + NADP(+) = dihydroxyacetone phosphate + NADPH + H(+). The protein operates within membrane lipid metabolism; glycerophospholipid metabolism. Functionally, catalyzes the reduction of the glycolytic intermediate dihydroxyacetone phosphate (DHAP) to sn-glycerol 3-phosphate (G3P), the key precursor for phospholipid synthesis. This Salinibacter ruber (strain DSM 13855 / M31) protein is Glycerol-3-phosphate dehydrogenase [NAD(P)+] 1.